A 98-amino-acid chain; its full sequence is Citrate lyase acyl carrier protein (98 aa).

O-(phosphoribosyl dephospho-coenzyme A)serine is present on Ser14.

Belongs to the CitD family. In terms of assembly, oligomer with a subunit composition of (alpha,beta,gamma)6.

The protein resides in the cytoplasm. In terms of biological role, covalent carrier of the coenzyme of citrate lyase. In Shigella boydii serotype 4 (strain Sb227), this protein is Citrate lyase acyl carrier protein.